A 141-amino-acid polypeptide reads, in one-letter code: Ribosome-binding factor A (141 aa).

This sequence belongs to the RbfA family. As to quaternary structure, monomer. Binds 30S ribosomal subunits, but not 50S ribosomal subunits or 70S ribosomes.

It is found in the cytoplasm. Its function is as follows. One of several proteins that assist in the late maturation steps of the functional core of the 30S ribosomal subunit. Associates with free 30S ribosomal subunits (but not with 30S subunits that are part of 70S ribosomes or polysomes). Required for efficient processing of 16S rRNA. May interact with the 5'-terminal helix region of 16S rRNA. The chain is Ribosome-binding factor A from Afipia carboxidovorans (strain ATCC 49405 / DSM 1227 / KCTC 32145 / OM5) (Oligotropha carboxidovorans).